Here is a 147-residue protein sequence, read N- to C-terminus: Myoglobin (147 aa).

Residues 2 to 141 (ADFDAVLKCW…VIADLEANYK (140 aa)) form the Globin domain. His60 lines the nitrite pocket. His60 lines the O2 pocket. His89 contributes to the heme b binding site.

It belongs to the globin family. As to quaternary structure, monomeric.

It is found in the cytoplasm. It localises to the sarcoplasm. The enzyme catalyses Fe(III)-heme b-[protein] + nitric oxide + H2O = Fe(II)-heme b-[protein] + nitrite + 2 H(+). It carries out the reaction H2O2 + AH2 = A + 2 H2O. Functionally, monomeric heme protein which primary function is to store oxygen and facilitate its diffusion within muscle tissues. Reversibly binds oxygen through a pentacoordinated heme iron and enables its timely and efficient release as needed during periods of heightened demand. Depending on the oxidative conditions of tissues and cells, and in addition to its ability to bind oxygen, it also has a nitrite reductase activity whereby it regulates the production of bioactive nitric oxide. Under stress conditions, like hypoxia and anoxia, it also protects cells against reactive oxygen species thanks to its pseudoperoxidase activity. The polypeptide is Myoglobin (mb) (Auxis rochei (Bullet tuna)).